Reading from the N-terminus, the 238-residue chain is Probable transcriptional regulatory protein CHU_3516 (238 aa).

The protein belongs to the TACO1 family.

It localises to the cytoplasm. This Cytophaga hutchinsonii (strain ATCC 33406 / DSM 1761 / CIP 103989 / NBRC 15051 / NCIMB 9469 / D465) protein is Probable transcriptional regulatory protein CHU_3516.